The following is a 574-amino-acid chain: 2-succinyl-5-enolpyruvyl-6-hydroxy-3-cyclohexene-1-carboxylate synthase (574 aa).

This sequence belongs to the TPP enzyme family. MenD subfamily. In terms of assembly, homodimer. Mg(2+) serves as cofactor. Requires Mn(2+) as cofactor. Thiamine diphosphate is required as a cofactor.

It catalyses the reaction isochorismate + 2-oxoglutarate + H(+) = 5-enolpyruvoyl-6-hydroxy-2-succinyl-cyclohex-3-ene-1-carboxylate + CO2. It participates in quinol/quinone metabolism; 1,4-dihydroxy-2-naphthoate biosynthesis; 1,4-dihydroxy-2-naphthoate from chorismate: step 2/7. The protein operates within cofactor biosynthesis; phylloquinone biosynthesis. Catalyzes the thiamine diphosphate-dependent decarboxylation of 2-oxoglutarate and the subsequent addition of the resulting succinic semialdehyde-thiamine pyrophosphate anion to isochorismate to yield 2-succinyl-5-enolpyruvyl-6-hydroxy-3-cyclohexene-1-carboxylate (SEPHCHC). This is 2-succinyl-5-enolpyruvyl-6-hydroxy-3-cyclohexene-1-carboxylate synthase from Prochlorococcus marinus (strain SARG / CCMP1375 / SS120).